The following is a 1615-amino-acid chain: Mediator of RNA polymerase II transcription subunit 23 (1615 aa).

Disordered regions lie at residues R40–P67 and S1230–E1270. Residues Q41–P51 show a composition bias toward basic and acidic residues. Over residues S1230–S1241 the composition is skewed to low complexity.

It belongs to the Mediator complex subunit 23 family. In terms of assembly, component of the Mediator complex.

The protein resides in the nucleus. Component of the Mediator complex, a coactivator involved in the regulated transcription of nearly all RNA polymerase II-dependent genes. Mediator functions as a bridge to convey information from gene-specific regulatory proteins to the basal RNA polymerase II transcription machinery. The Mediator complex, having a compact conformation in its free form, is recruited to promoters by direct interactions with regulatory proteins and serves for the assembly of a functional preinitiation complex with RNA polymerase II and the general transcription factors. This is Mediator of RNA polymerase II transcription subunit 23 (MED23) from Arabidopsis thaliana (Mouse-ear cress).